The chain runs to 146 residues: Hemoglobin subunit beta (146 aa).

At valine 1 the chain carries N-acetylvaline. The Globin domain maps to histidine 2–histidine 146. Position 44 is a phosphoserine (serine 44). N6-acetyllysine is present on lysine 59. Heme b is bound at residue histidine 63. Lysine 82 is modified (N6-acetyllysine). Histidine 92 serves as a coordination point for heme b. Cysteine 93 is subject to S-nitrosocysteine. Lysine 144 is subject to N6-acetyllysine.

Belongs to the globin family. In terms of assembly, heterotetramer of two alpha chains and two beta chains. As to expression, red blood cells.

Functionally, involved in oxygen transport from the lung to the various peripheral tissues. The sequence is that of Hemoglobin subunit beta (HBB) from Spermophilus citellus (European ground squirrel).